The chain runs to 491 residues: MKLSTKLCWCGIKGRLRPQKQQQLHNTNLQMTELKKQKTAEQKTRPQNVGIKGIQIYIPTQCVNQSELEKFDGVSQGKYTIGLGQTNMSFVNDREDIYSMSLTVLSKLIKSYNIDTNKIGRLEVGTETLIDKSKSVKSVLMQLFGENTDVEGIDTLNACYGGTNALFNSLNWIESNAWDGRDAIVVCGDIAIYDKGAARPTGGAGTVAMWIGPDAPIVFDSVRASYMEHAYDFYKPDFTSEYPYVDGHFSLTCYVKALDQVYKSYSKKAISKGLVSDPAGSDALNVLKYFDYNVFHVPTCKLVTKSYGRLLYNDFRANPQLFPEVDAELATRDYDESLTDKNIEKTFVNVAKPFHKERVAQSLIVPTNTGNMYTASVYAAFASLLNYVGSDDLQGKRVGLFSYGSGLAASLYSCKIVGDVQHIIKELDITNKLAKRITETPKDYEAAIELRENAHLKKNFKPQGSIEHLQSGVYYLTNIDDKFRRSYDVKK.

E127 functions as the Proton donor/acceptor in the catalytic mechanism. C159 functions as the Acyl-thioester intermediate in the catalytic mechanism. The (3S)-3-hydroxy-3-methylglutaryl-CoA site is built by C159, T201, and S250. At S276 the chain carries Phosphoserine. H296 (proton donor/acceptor) is an active-site residue. H296, K305, N371, and S405 together coordinate (3S)-3-hydroxy-3-methylglutaryl-CoA.

This sequence belongs to the thiolase-like superfamily. HMG-CoA synthase family.

The catalysed reaction is acetoacetyl-CoA + acetyl-CoA + H2O = (3S)-3-hydroxy-3-methylglutaryl-CoA + CoA + H(+). It functions in the pathway metabolic intermediate biosynthesis; (R)-mevalonate biosynthesis; (R)-mevalonate from acetyl-CoA: step 2/3. In terms of biological role, hydroxymethylglutaryl-CoA synthase; part of the first module of ergosterol biosynthesis pathway that includes the early steps of the pathway, conserved across all eukaryotes, and which results in the formation of mevalonate from acetyl-coenzyme A (acetyl-CoA). ERG13 condenses acetyl-CoA with acetoacetyl-CoA to form hydroxymethylglutaryl-CoA (HMG-CoA). The first module starts with the action of the cytosolic acetyl-CoA acetyltransferase ERG10 that catalyzes the formation of acetoacetyl-CoA. The hydroxymethylglutaryl-CoA synthase ERG13 then condenses acetyl-CoA with acetoacetyl-CoA to form HMG-CoA. The rate-limiting step of the early module is the reduction to mevalonate by the 3-hydroxy-3-methylglutaryl-coenzyme A (HMG-CoA) reductases HMG1 and HMG2 which are derived from a single ancestral HMGR gene by gene duplication. The sequence is that of Hydroxymethylglutaryl-CoA synthase from Saccharomyces cerevisiae (strain ATCC 204508 / S288c) (Baker's yeast).